The primary structure comprises 236 residues: 1-(5-phosphoribosyl)-5-[(5-phosphoribosylamino)methylideneamino] imidazole-4-carboxamide isomerase (236 aa).

Residue Asp-8 is the Proton acceptor of the active site. Residue Asp-128 is the Proton donor of the active site.

The protein belongs to the HisA/HisF family.

Its subcellular location is the cytoplasm. It carries out the reaction 1-(5-phospho-beta-D-ribosyl)-5-[(5-phospho-beta-D-ribosylamino)methylideneamino]imidazole-4-carboxamide = 5-[(5-phospho-1-deoxy-D-ribulos-1-ylimino)methylamino]-1-(5-phospho-beta-D-ribosyl)imidazole-4-carboxamide. The protein operates within amino-acid biosynthesis; L-histidine biosynthesis; L-histidine from 5-phospho-alpha-D-ribose 1-diphosphate: step 4/9. The sequence is that of 1-(5-phosphoribosyl)-5-[(5-phosphoribosylamino)methylideneamino] imidazole-4-carboxamide isomerase from Nitrosopumilus maritimus (strain SCM1).